A 475-amino-acid polypeptide reads, in one-letter code: MSPQTETKASVGFKAGVKDYKLTYYTPDYETKDTDILAAFRVTPQPGVPPEEAGAAVAAESSTGTWTTVWTDGLTSLDRYKGRCYHIEPVAGEQTQFIAYVAYPLDLFEEGSVTNLFTSIVGNVFGLKALRALRLEGLRIPPAYSKTFQGPPHGIQVERDKLNKYGRPLLGCTIKPKLGLSAKNYGRAVYECLRGGLDFTKDDENVNSQPFMRWRDRFVFCAEAIYKAQAETGEIKGHYLNATAGTCEEMMKRAVFARELGVPIVMHDYLTGGFTANTSLAHYCRDNGLLLHIHRAMHAVIDRQKNHGMHFRVLAKALRMSGGDHIHAGTVVGKLEGERDITLGFVDLLRDDFIEKDRSRGIYFTQDWVSLPGVLPVASGGIHVWHMPALTEIFGDDSVLQFGGGTLGHPWGNAPGAVANRVALEACVQARNEGRDLAREGNEIIREASKWSPELAAACEVWKAIKFEFAAVDTL.

Positions 1–2 (MS) are excised as a propeptide. Proline 3 carries the N-acetylproline modification. Lysine 14 is modified (N6,N6,N6-trimethyllysine). Positions 123 and 173 each coordinate substrate. Lysine 175 serves as the catalytic Proton acceptor. Lysine 177 contributes to the substrate binding site. Mg(2+) contacts are provided by lysine 201, aspartate 203, and glutamate 204. Lysine 201 bears the N6-carboxylysine mark. Histidine 294 serves as the catalytic Proton acceptor. Residues arginine 295, histidine 327, and serine 379 each contribute to the substrate site.

Belongs to the RuBisCO large chain family. Type I subfamily. In terms of assembly, heterohexadecamer of 8 large chains and 8 small chains; disulfide-linked. The disulfide link is formed within the large subunit homodimers. The cofactor is Mg(2+). In terms of processing, the disulfide bond which can form in the large chain dimeric partners within the hexadecamer appears to be associated with oxidative stress and protein turnover.

It localises to the plastid. It is found in the chloroplast. The enzyme catalyses 2 (2R)-3-phosphoglycerate + 2 H(+) = D-ribulose 1,5-bisphosphate + CO2 + H2O. It carries out the reaction D-ribulose 1,5-bisphosphate + O2 = 2-phosphoglycolate + (2R)-3-phosphoglycerate + 2 H(+). Its function is as follows. RuBisCO catalyzes two reactions: the carboxylation of D-ribulose 1,5-bisphosphate, the primary event in carbon dioxide fixation, as well as the oxidative fragmentation of the pentose substrate in the photorespiration process. Both reactions occur simultaneously and in competition at the same active site. The polypeptide is Ribulose bisphosphate carboxylase large chain (Viscum album (European mistletoe)).